Reading from the N-terminus, the 280-residue chain is MRLVQTINEMKRLSKEAINKGKTIGFVPTMGYLHEGHLSLVKKAREDNDIVVVSIFVNPTQFGPNEDFNRYPRDLERDLRLLEPLNVDYVFYPSVEEMYPKNYSVYVDEVELSKYLCGAKRPGHFRGVCTVVTKLFNIVKPTRAYFGQKDAQQFRILRRMVQNLNMDVEMIEMPIVRESDGLAMSSRNVYLNEEERKEATRLHKSLLKAKELIESGERDVSKIKNSMLEILNHPLLKIDYVEIVDEETLKPIEKIEGKVIIALAVFVGKARLIDNMIINC.

Residue 30 to 37 (MGYLHEGH) coordinates ATP. The active-site Proton donor is histidine 37. Glutamine 61 lines the (R)-pantoate pocket. Glutamine 61 contributes to the beta-alanine binding site. 147–150 (GQKD) provides a ligand contact to ATP. Glutamine 153 contacts (R)-pantoate. Residues valine 176 and 184–187 (MSSR) contribute to the ATP site.

The protein belongs to the pantothenate synthetase family. In terms of assembly, homodimer.

Its subcellular location is the cytoplasm. It carries out the reaction (R)-pantoate + beta-alanine + ATP = (R)-pantothenate + AMP + diphosphate + H(+). Its pathway is cofactor biosynthesis; (R)-pantothenate biosynthesis; (R)-pantothenate from (R)-pantoate and beta-alanine: step 1/1. Its function is as follows. Catalyzes the condensation of pantoate with beta-alanine in an ATP-dependent reaction via a pantoyl-adenylate intermediate. This chain is Pantothenate synthetase, found in Fervidobacterium nodosum (strain ATCC 35602 / DSM 5306 / Rt17-B1).